The following is a 285-amino-acid chain: Undecaprenyl-diphosphatase (285 aa).

Transmembrane regions (helical) follow at residues 40 to 60 (GPLIDVAVHVGSLLAIIVYFF), 89 to 109 (LFWWIVLGTIPAVAFGLAIKL), 137 to 157 (DLIAFNLIVYGIALGLADWLG), 171 to 191 (GLIVGIAQALAIIPGTSRSGV), 209 to 229 (FSFLLSIPAVAGAGVLIVPEI), 241 to 261 (LIAGVLTFIAAFLTMAFLMNF), and 265 to 285 (ASMLVFVFYRVAMGCALLAFF).

The protein belongs to the UppP family.

The protein localises to the cell inner membrane. It carries out the reaction di-trans,octa-cis-undecaprenyl diphosphate + H2O = di-trans,octa-cis-undecaprenyl phosphate + phosphate + H(+). In terms of biological role, catalyzes the dephosphorylation of undecaprenyl diphosphate (UPP). Confers resistance to bacitracin. In Erythrobacter litoralis (strain HTCC2594), this protein is Undecaprenyl-diphosphatase.